The primary structure comprises 234 residues: Large ribosomal subunit protein uL1 (234 aa).

It belongs to the universal ribosomal protein uL1 family. Part of the 50S ribosomal subunit.

In terms of biological role, binds directly to 23S rRNA. The L1 stalk is quite mobile in the ribosome, and is involved in E site tRNA release. Its function is as follows. Protein L1 is also a translational repressor protein, it controls the translation of the L11 operon by binding to its mRNA. This Serratia marcescens protein is Large ribosomal subunit protein uL1.